We begin with the raw amino-acid sequence, 363 residues long: 3-isopropylmalate dehydrogenase (363 aa).

78–91 (GKRWDHLPINERPE) lines the NAD(+) pocket. The substrate site is built by arginine 99, arginine 109, arginine 138, and aspartate 227. The Mg(2+) site is built by aspartate 227, aspartate 251, and aspartate 255. Residue 285–297 (GSAPDIAGKNTAN) coordinates NAD(+).

Belongs to the isocitrate and isopropylmalate dehydrogenases family. LeuB type 1 subfamily. As to quaternary structure, homodimer. Requires Mg(2+) as cofactor. Mn(2+) is required as a cofactor.

Its subcellular location is the cytoplasm. The catalysed reaction is (2R,3S)-3-isopropylmalate + NAD(+) = 4-methyl-2-oxopentanoate + CO2 + NADH. Its pathway is amino-acid biosynthesis; L-leucine biosynthesis; L-leucine from 3-methyl-2-oxobutanoate: step 3/4. Catalyzes the oxidation of 3-carboxy-2-hydroxy-4-methylpentanoate (3-isopropylmalate) to 3-carboxy-4-methyl-2-oxopentanoate. The product decarboxylates to 4-methyl-2 oxopentanoate. The chain is 3-isopropylmalate dehydrogenase from Buchnera aphidicola subsp. Uroleucon helianthicola.